A 568-amino-acid polypeptide reads, in one-letter code: Potassium-transporting ATPase potassium-binding subunit (568 aa).

The next 10 membrane-spanning stretches (helical) occupy residues 3–23 (TEIL…YPLG), 64–84 (FLKA…VLLV), 133–153 (FVIM…MAGI), 179–199 (ILLP…TPMG), 255–275 (MVEC…LGFY), 281–301 (LAYS…CINV), 375–395 (FGGV…AVFI), 418–438 (IATI…AISS), 497–517 (IVLI…AGLL), and 536–556 (TFGI…FFPV).

This sequence belongs to the KdpA family. The system is composed of three essential subunits: KdpA, KdpB and KdpC.

It localises to the cell inner membrane. Functionally, part of the high-affinity ATP-driven potassium transport (or Kdp) system, which catalyzes the hydrolysis of ATP coupled with the electrogenic transport of potassium into the cytoplasm. This subunit binds the periplasmic potassium ions and delivers the ions to the membrane domain of KdpB through an intramembrane tunnel. The chain is Potassium-transporting ATPase potassium-binding subunit from Bacteroides thetaiotaomicron (strain ATCC 29148 / DSM 2079 / JCM 5827 / CCUG 10774 / NCTC 10582 / VPI-5482 / E50).